The sequence spans 600 residues: UvrABC system protein C (600 aa).

The 78-residue stretch at 15-92 (EKAGCYLMKD…IKKYQPYYNV (78 aa)) folds into the GIY-YIG domain. One can recognise a UVR domain in the interval 197 to 232 (QEVKKDLTNKMLQASADLEFERAGELRDQLKYIEET).

It belongs to the UvrC family. In terms of assembly, interacts with UvrB in an incision complex.

The protein localises to the cytoplasm. In terms of biological role, the UvrABC repair system catalyzes the recognition and processing of DNA lesions. UvrC both incises the 5' and 3' sides of the lesion. The N-terminal half is responsible for the 3' incision and the C-terminal half is responsible for the 5' incision. This is UvrABC system protein C from Lactobacillus delbrueckii subsp. bulgaricus (strain ATCC BAA-365 / Lb-18).